The following is an 872-amino-acid chain: Alanine--tRNA ligase (872 aa).

Residues histidine 567, histidine 571, cysteine 669, and histidine 673 each contribute to the Zn(2+) site.

It belongs to the class-II aminoacyl-tRNA synthetase family. It depends on Zn(2+) as a cofactor.

The protein resides in the cytoplasm. It carries out the reaction tRNA(Ala) + L-alanine + ATP = L-alanyl-tRNA(Ala) + AMP + diphosphate. In terms of biological role, catalyzes the attachment of alanine to tRNA(Ala) in a two-step reaction: alanine is first activated by ATP to form Ala-AMP and then transferred to the acceptor end of tRNA(Ala). Also edits incorrectly charged Ser-tRNA(Ala) and Gly-tRNA(Ala) via its editing domain. The polypeptide is Alanine--tRNA ligase (Streptococcus sanguinis (strain SK36)).